Consider the following 143-residue polypeptide: MEMLQGLLLLWLLLLNVGGVWTSREPLRPLCRPINATLAAENEACPVCVTFTTTICAGYCPSMMRVLPAALPPVPQPVCTYRELRFASVRLPGCPPGVDPVVSFPVALSCRCGPCRLSSSDCGGPRAQPLACDRPPLPGLLFL.

Positions Met1–Thr22 are cleaved as a signal peptide. Disulfide bonds link Cys31/Cys79, Cys45/Cys94, Cys48/Cys132, Cys56/Cys110, Cys60/Cys112, and Cys115/Cys122. Asn35 is a glycosylation site (N-linked (GlcNAc...) asparagine).

The protein belongs to the glycoprotein hormones subunit beta family. In terms of assembly, heterodimer of a common alpha chain and a unique beta chain which confers biological specificity to thyrotropin, lutropin, follitropin and gonadotropin.

It localises to the secreted. Functionally, promotes spermatogenesis and ovulation by stimulating the testes and ovaries to synthesize steroids. The polypeptide is Lutropin subunit beta (LHB) (Felis catus (Cat)).